A 142-amino-acid chain; its full sequence is PDZ domain-containing protein 11 (142 aa).

The PDZ domain maps to 49–131; sequence TIVLKKPPGA…ILMKVRYFPY (83 aa).

Its subcellular location is the cytoplasm. This chain is PDZ domain-containing protein 11 (pdzd11), found in Danio rerio (Zebrafish).